Consider the following 206-residue polypeptide: MKHNNVIPNGHFKKHWQNYVKTWFNQPARKTRRRVARQKKAVKIFPRPTAGPLRPVVHGQTLKYNMKVRTGKGFTLEELKAAGIPKKLAPTIGISLDHRRKNRSLEGLQSNVQRLKTYKAKLVIFPRRARKVKAGDSTAEELANATQVQGDYMPIVREKQAMELVKLTSEMKSVNAYDKIRLERTNKRHAGARAKRAADAEKEEKK.

The disordered stretch occupies residues 182-206 (LERTNKRHAGARAKRAADAEKEEKK). Over residues 186-195 (NKRHAGARAK) the composition is skewed to basic residues. The segment covering 196–206 (RAADAEKEEKK) has biased composition (basic and acidic residues).

Belongs to the eukaryotic ribosomal protein eL13 family.

This chain is Large ribosomal subunit protein eL13y, found in Brassica napus (Rape).